Consider the following 213-residue polypeptide: ATP-dependent Clp protease proteolytic subunit 1 (213 aa).

Catalysis depends on Ser-108, which acts as the Nucleophile. His-133 is a catalytic residue.

The protein belongs to the peptidase S14 family. Fourteen ClpP subunits assemble into 2 heptameric rings which stack back to back to give a disk-like structure with a central cavity, resembling the structure of eukaryotic proteasomes.

It localises to the cytoplasm. It carries out the reaction Hydrolysis of proteins to small peptides in the presence of ATP and magnesium. alpha-casein is the usual test substrate. In the absence of ATP, only oligopeptides shorter than five residues are hydrolyzed (such as succinyl-Leu-Tyr-|-NHMec, and Leu-Tyr-Leu-|-Tyr-Trp, in which cleavage of the -Tyr-|-Leu- and -Tyr-|-Trp bonds also occurs).. In terms of biological role, cleaves peptides in various proteins in a process that requires ATP hydrolysis. Has a chymotrypsin-like activity. Plays a major role in the degradation of misfolded proteins. In Frankia casuarinae (strain DSM 45818 / CECT 9043 / HFP020203 / CcI3), this protein is ATP-dependent Clp protease proteolytic subunit 1.